Reading from the N-terminus, the 664-residue chain is Alkaline/neutral invertase C, mitochondrial (664 aa).

A phosphoserine mark is found at S41, S125, and S657.

It belongs to the glycosyl hydrolase 100 family. Expressed in seedlings, roots and flowers.

The protein resides in the mitochondrion. It catalyses the reaction Hydrolysis of terminal non-reducing beta-D-fructofuranoside residues in beta-D-fructofuranosides.. Functionally, mitochondrial invertase that cleaves sucrose into glucose and fructose and is involved in the regulation of aerial tissue development and floral transition. May be modulating hormone balance in relation to the radicle emergence. The polypeptide is Alkaline/neutral invertase C, mitochondrial (Arabidopsis thaliana (Mouse-ear cress)).